Here is a 248-residue protein sequence, read N- to C-terminus: Probable phosphatase VCM66_A0854 (248 aa).

Zn(2+) contacts are provided by His-8, His-10, His-16, His-41, Glu-74, His-102, His-132, Asp-194, and His-196.

It belongs to the PHP family. Requires Zn(2+) as cofactor.

This Vibrio cholerae serotype O1 (strain M66-2) protein is Probable phosphatase VCM66_A0854.